Consider the following 286-residue polypeptide: Acetylglutamate kinase (286 aa).

Substrate is bound by residues 63–64, arginine 85, and asparagine 178; that span reads GG.

It belongs to the acetylglutamate kinase family. ArgB subfamily.

The protein resides in the cytoplasm. The catalysed reaction is N-acetyl-L-glutamate + ATP = N-acetyl-L-glutamyl 5-phosphate + ADP. It functions in the pathway amino-acid biosynthesis; L-arginine biosynthesis; N(2)-acetyl-L-ornithine from L-glutamate: step 2/4. Its function is as follows. Catalyzes the ATP-dependent phosphorylation of N-acetyl-L-glutamate. The sequence is that of Acetylglutamate kinase from Clostridioides difficile (strain 630) (Peptoclostridium difficile).